Reading from the N-terminus, the 30-residue chain is Cyclotide hyen-G (30 aa).

Positions 1–30 (GLPCGESCVYIPCISTVLGCSCSNKVCYRD) form a cross-link, cyclopeptide (Gly-Asp). Intrachain disulfides connect cysteine 4-cysteine 20, cysteine 8-cysteine 22, and cysteine 13-cysteine 27.

In terms of processing, this is a cyclic peptide. As to expression, detected in stems (at protein level).

Probably participates in a plant defense mechanism. The sequence is that of Cyclotide hyen-G from Pigea enneasperma (Spade flower).